Consider the following 167-residue polypeptide: Protein-export protein SecB (167 aa).

This sequence belongs to the SecB family. In terms of assembly, homotetramer, a dimer of dimers. One homotetramer interacts with 1 SecA dimer.

The protein localises to the cytoplasm. Functionally, one of the proteins required for the normal export of preproteins out of the cell cytoplasm. It is a molecular chaperone that binds to a subset of precursor proteins, maintaining them in a translocation-competent state. It also specifically binds to its receptor SecA. The chain is Protein-export protein SecB from Wolbachia pipientis subsp. Culex pipiens (strain wPip).